Here is an 83-residue protein sequence, read N- to C-terminus: Small ribosomal subunit protein bS20 (83 aa).

Belongs to the bacterial ribosomal protein bS20 family.

In terms of biological role, binds directly to 16S ribosomal RNA. The polypeptide is Small ribosomal subunit protein bS20 (Staphylococcus haemolyticus (strain JCSC1435)).